The sequence spans 328 residues: Stress response kinase A (328 aa).

The active-site Proton acceptor is D201. 2 residues coordinate Mg(2+): N206 and D217. The active site involves D217.

This sequence belongs to the SrkA/RdoA protein kinase family. In terms of assembly, monomer. Requires Mg(2+) as cofactor.

It is found in the cytoplasm. It catalyses the reaction L-seryl-[protein] + ATP = O-phospho-L-seryl-[protein] + ADP + H(+). The enzyme catalyses L-threonyl-[protein] + ATP = O-phospho-L-threonyl-[protein] + ADP + H(+). In terms of biological role, a protein kinase that phosphorylates Ser and Thr residues. Probably acts to suppress the effects of stress linked to accumulation of reactive oxygen species. Probably involved in the extracytoplasmic stress response. In Escherichia coli O6:H1 (strain CFT073 / ATCC 700928 / UPEC), this protein is Stress response kinase A.